Consider the following 441-residue polypeptide: ATP-dependent RNA helicase sub2 (441 aa).

Residues Asp-19–Ala-29 are compositionally biased toward low complexity. The tract at residues Asp-19–Gly-43 is disordered. The short motif at Thr-58–Gln-86 is the Q motif element. A Helicase ATP-binding domain is found at Ile-89–Val-264. Ala-102–Thr-109 is a binding site for ATP. Residues Asp-211–Asp-214 carry the DEAD box motif. In terms of domain architecture, Helicase C-terminal spans Gly-276–Ser-437.

Belongs to the DEAD box helicase family. DECD subfamily.

Its subcellular location is the nucleus. The catalysed reaction is ATP + H2O = ADP + phosphate + H(+). Its function is as follows. ATP-binding RNA helicase involved in transcription elongation and required for the export of mRNA out of the nucleus. SUB2 also plays a role in pre-mRNA splicing and spliceosome assembly. May be involved in rDNA and telomeric silencing, and maintenance of genome integrity. This is ATP-dependent RNA helicase sub2 (sub2) from Aspergillus clavatus (strain ATCC 1007 / CBS 513.65 / DSM 816 / NCTC 3887 / NRRL 1 / QM 1276 / 107).